Here is a 371-residue protein sequence, read N- to C-terminus: Protein STRICTOSIDINE SYNTHASE-LIKE 7 (371 aa).

The signal sequence occupies residues 1 to 25; that stretch reads MPVLFSSRSLILSIIVPLLISIALY. N-linked (GlcNAc...) asparagine glycosylation is found at N101, N137, and N285. Position 303 is a phosphotyrosine (Y303).

It belongs to the strictosidine synthase family.

The protein localises to the vacuole. The sequence is that of Protein STRICTOSIDINE SYNTHASE-LIKE 7 from Arabidopsis thaliana (Mouse-ear cress).